Here is a 1486-residue protein sequence, read N- to C-terminus: Chromosome partition protein MukB (1486 aa).

34 to 41 is an ATP binding site; sequence GGNGAGKS. Coiled coils occupy residues 326-418, 444-480, and 509-603; these read LEAD…QYNQ, LETF…QAYQ, and RHLA…RAPV. Positions 666 to 783 are flexible hinge; it reads PGGSEDQRLN…EVPLFGRAAR (118 aa). Coiled-coil stretches lie at residues 835–923, 977–1115, and 1209–1266; these read EAEI…AKLE, EMLS…TAKA, and VEAI…QNVS.

This sequence belongs to the SMC family. MukB subfamily. As to quaternary structure, homodimerization via its hinge domain. Binds to DNA via its C-terminal region. Interacts, and probably forms a ternary complex, with MukE and MukF via its C-terminal region. The complex formation is stimulated by calcium or magnesium. Interacts with tubulin-related protein FtsZ.

It localises to the cytoplasm. Its subcellular location is the nucleoid. Functionally, plays a central role in chromosome condensation, segregation and cell cycle progression. Functions as a homodimer, which is essential for chromosome partition. Involved in negative DNA supercoiling in vivo, and by this means organize and compact chromosomes. May achieve or facilitate chromosome segregation by condensation DNA from both sides of a centrally located replisome during cell division. In Escherichia coli O9:H4 (strain HS), this protein is Chromosome partition protein MukB.